A 346-amino-acid polypeptide reads, in one-letter code: N-acetyl-gamma-glutamyl-phosphate reductase (346 aa).

Cys-150 is a catalytic residue.

Belongs to the NAGSA dehydrogenase family. Type 1 subfamily.

The protein localises to the cytoplasm. The enzyme catalyses N-acetyl-L-glutamate 5-semialdehyde + phosphate + NADP(+) = N-acetyl-L-glutamyl 5-phosphate + NADPH + H(+). It functions in the pathway amino-acid biosynthesis; L-arginine biosynthesis; N(2)-acetyl-L-ornithine from L-glutamate: step 3/4. Catalyzes the NADPH-dependent reduction of N-acetyl-5-glutamyl phosphate to yield N-acetyl-L-glutamate 5-semialdehyde. This Lachnoclostridium phytofermentans (strain ATCC 700394 / DSM 18823 / ISDg) (Clostridium phytofermentans) protein is N-acetyl-gamma-glutamyl-phosphate reductase.